The following is a 508-amino-acid chain: Glycerol kinase (508 aa).

An ADP-binding site is contributed by Thr-14. ATP-binding residues include Thr-14, Thr-15, and Ser-16. Sn-glycerol 3-phosphate is bound at residue Thr-14. Arg-18 provides a ligand contact to ADP. The sn-glycerol 3-phosphate site is built by Arg-84, Glu-85, Tyr-134, and Asp-247. Residues Arg-84, Glu-85, Tyr-134, Asp-247, and Gln-248 each contribute to the glycerol site. Positions 269 and 313 each coordinate ADP. ATP contacts are provided by Thr-269, Gly-313, Gln-317, and Gly-416. Gly-416 serves as a coordination point for ADP.

It belongs to the FGGY kinase family.

It carries out the reaction glycerol + ATP = sn-glycerol 3-phosphate + ADP + H(+). It participates in polyol metabolism; glycerol degradation via glycerol kinase pathway; sn-glycerol 3-phosphate from glycerol: step 1/1. Inhibited by fructose 1,6-bisphosphate (FBP). In terms of biological role, key enzyme in the regulation of glycerol uptake and metabolism. Catalyzes the phosphorylation of glycerol to yield sn-glycerol 3-phosphate. This Mycoplasmoides gallisepticum (strain R(low / passage 15 / clone 2)) (Mycoplasma gallisepticum) protein is Glycerol kinase.